A 265-amino-acid polypeptide reads, in one-letter code: Large ribosomal subunit protein eL8 (265 aa).

This sequence belongs to the eukaryotic ribosomal protein eL8 family. As to quaternary structure, interacts with cmd-1 in the presence of Ca(2+).

In Caenorhabditis elegans, this protein is Large ribosomal subunit protein eL8.